The chain runs to 472 residues: Cannabinoid receptor 1 (472 aa).

Topologically, residues 1 to 116 (MKSILDGLAD…CFMVLNPSQQ (116 aa)) are extracellular. Residues 2 to 23 (KSILDGLADTTFRTITTDLLYV) form a required for mitochondrial localization region. Asparagine 77 and asparagine 83 each carry an N-linked (GlcNAc...) asparagine glycan. A helical membrane pass occupies residues 117 to 142 (LAIAVLSLTLGTFTVLENLLVLCVIL). Residues 143-154 (HSRSLRCRPSYH) lie on the Cytoplasmic side of the membrane. The helical transmembrane segment at 155-175 (FIGSLAVADLLGSVIFVYSFI) threads the bilayer. The Extracellular portion of the chain corresponds to 176 to 187 (DFHVFHRKDSRN). The chain crosses the membrane as a helical span at residues 188–212 (VFLFKLGGVTASFTASVGSLFLTAI). Residues 213-232 (DRYISIHRPLAYKRIVTRPK) lie on the Cytoplasmic side of the membrane. The helical transmembrane segment at 233–255 (AVVAFCLMWTIAIVIAVLPLLGW) threads the bilayer. The Extracellular segment spans residues 256–273 (NCEKLQSVCSDIFPHIDE). Residues 274–299 (TYLMFWIGVTSVLLLFIVYAYMYILW) form a helical membrane-spanning segment. At 300–344 (KAHSHAVRMIQRGTQKSIIIHTSEDGKVQVTRPDQARMDIRLAKT) the chain is on the cytoplasmic side. The chain crosses the membrane as a helical span at residues 345 to 365 (LVLILVVLIICWGPLLAIMVY). Residues 366–377 (DVFGKMNKLIKT) lie on the Extracellular side of the membrane. The helical transmembrane segment at 378-399 (VFAFCSMLCLLNSTVNPIIYAL) threads the bilayer. The Cytoplasmic segment spans residues 400–472 (RSKDLRHAFR…VSTDTSAEAL (73 aa)). Cysteine 415 carries S-palmitoyl cysteine lipidation. 2 positions are modified to phosphoserine: serine 425 and serine 429.

The protein belongs to the G-protein coupled receptor 1 family. In terms of assembly, interacts (via C-terminus) with CNRIP1; this interaction attenuates constitutive, but not agonist-dependent, inhibition of voltage-gated Ca(2+) channels in neurons. Associates with G protein alpha subunits, including G(i) alpha-1/GNAI1, G(i) alpha-3/GNAI3 and G(o)-alpha/GNAO1; palmitoylation is important for interaction with GNAI3 and GNAO1. Post-translationally, palmitoylation at Cys-415 is important for recruitment at plasma membrane and lipid rafts and association with G protein alpha subunits. As to expression, widely expressed, with highest levels in fetal and adult brain. Expression levels of isoform 2 and isoform 3 are much lower than those of isoform 1.

Its subcellular location is the cell membrane. It localises to the membrane raft. The protein localises to the mitochondrion outer membrane. The protein resides in the cell projection. It is found in the axon. Its subcellular location is the presynapse. Its activity is regulated as follows. Hemopressin, a peptide derived from hemoglobin subunit alpha (HBA1 and/or HBA2), acts as an antagonist peptide: hemopressin-binding efficiently blocks cannabinoid receptor CNR1 and subsequent signaling. G-protein coupled receptor for endogenous cannabinoids (eCBs), including N-arachidonoylethanolamide (also called anandamide or AEA) and 2-arachidonoylglycerol (2-AG), as well as phytocannabinoids, such as delta(9)-tetrahydrocannabinol (THC). Mediates many cannabinoid-induced effects, acting, among others, on food intake, memory loss, gastrointestinal motility, catalepsy, ambulatory activity, anxiety, chronic pain. Signaling typically involves reduction in cyclic AMP. In the hypothalamus, may have a dual effect on mitochondrial respiration depending upon the agonist dose and possibly upon the cell type. Increases respiration at low doses, while decreases respiration at high doses. At high doses, CNR1 signal transduction involves G-protein alpha-i protein activation and subsequent inhibition of mitochondrial soluble adenylate cyclase, decrease in cyclic AMP concentration, inhibition of protein kinase A (PKA)-dependent phosphorylation of specific subunits of the mitochondrial electron transport system, including NDUFS2. In the hypothalamus, inhibits leptin-induced reactive oxygen species (ROS) formation and mediates cannabinoid-induced increase in SREBF1 and FASN gene expression. In response to cannabinoids, drives the release of orexigenic beta-endorphin, but not that of melanocyte-stimulating hormone alpha/alpha-MSH, from hypothalamic POMC neurons, hence promoting food intake. In the hippocampus, regulates cellular respiration and energy production in response to cannabinoids. Involved in cannabinoid-dependent depolarization-induced suppression of inhibition (DSI), a process in which depolarization of CA1 postsynaptic pyramidal neurons mobilizes eCBs, which retrogradely activate presynaptic CB1 receptors, transiently decreasing GABAergic inhibitory neurotransmission. Also reduces excitatory synaptic transmission. In superior cervical ganglions and cerebral vascular smooth muscle cells, inhibits voltage-gated Ca(2+) channels in a constitutive, as well as agonist-dependent manner. In cerebral vascular smooth muscle cells, cannabinoid-induced inhibition of voltage-gated Ca(2+) channels leads to vasodilation and decreased vascular tone. Induces leptin production in adipocytes and reduces LRP2-mediated leptin clearance in the kidney, hence participating in hyperleptinemia. In adipose tissue, CNR1 signaling leads to increased expression of SREBF1, ACACA and FASN genes. In the liver, activation by endocannabinoids leads to increased de novo lipogenesis and reduced fatty acid catabolism, associated with increased expression of SREBF1/SREBP-1, GCK, ACACA, ACACB and FASN genes. May also affect de novo cholesterol synthesis and HDL-cholesteryl ether uptake. Peripherally modulates energy metabolism. In high carbohydrate diet-induced obesity, may decrease the expression of mitochondrial dihydrolipoyl dehydrogenase/DLD in striated muscles, as well as that of selected glucose/ pyruvate metabolic enzymes, hence affecting energy expenditure through mitochondrial metabolism. In response to cannabinoid anandamide, elicits a pro-inflammatory response in macrophages, which involves NLRP3 inflammasome activation and IL1B and IL18 secretion. In macrophages infiltrating pancreatic islets, this process may participate in the progression of type-2 diabetes and associated loss of pancreatic beta-cells. In terms of biological role, binds both 2-arachidonoylglycerol (2-AG) and anandamide. Functionally, only binds 2-arachidonoylglycerol (2-AG) with high affinity. Contrary to its effect on isoform 1, 2-AG behaves as an inverse agonist on isoform 2 in assays measuring GTP binding to membranes. Its function is as follows. Only binds 2-arachidonoylglycerol (2-AG) with high affinity. Contrary to its effect on isoform 1, 2-AG behaves as an inverse agonist on isoform 3 in assays measuring GTP binding to membranes. The sequence is that of Cannabinoid receptor 1 (CNR1) from Homo sapiens (Human).